A 271-amino-acid polypeptide reads, in one-letter code: Small ribosomal subunit protein uS2 (271 aa).

Belongs to the universal ribosomal protein uS2 family.

The protein is Small ribosomal subunit protein uS2 of Wolbachia pipientis subsp. Culex pipiens (strain wPip).